A 245-amino-acid polypeptide reads, in one-letter code: MALRLQMLGTGGAFAKKYFNNNALLYAGDFTLLIDCGITAPLALHTIGKSVEEIDAVLITHIHGDHVGGLEELAFRRKFGSGRKPILYIAENLVEPLWENTLKGGLSQDGVIHSLNDVFDVRLLKESEPAQLAPELKVELIRTPHIPGKPSYSLYINDEIFYSADMTFEPELLMRLVRERGCRRIFHEVQLTGKGEVHTTLQELLSLPTEIQSQILLKHYSDDMESFRGATGNMDFLRQHEVYTL.

The beta-lactamase-like stretch occupies residues 19–219; sequence FNNNALLYAG…EIQSQILLKH (201 aa). Residues His61, His63, Asp65, His66, His145, Asp165, and His219 each coordinate Zn(2+).

The protein belongs to the anti-Pycsar protein Apyc1 family. Homodimer. Zn(2+) serves as cofactor.

The enzyme catalyses 3',5'-cyclic CMP + H2O = CMP + H(+). The catalysed reaction is 3',5'-cyclic UMP + H2O = UMP + H(+). Its function is as follows. Counteracts the endogenous Pycsar antiviral defense system. Phosphodiesterase that enables metal-dependent hydrolysis of host cyclic nucleotide Pycsar defense signals such as cCMP and cUMP. The chain is Anti-Pycsar protein Apyc1 from Paenibacillus sp. (strain J14).